The sequence spans 333 residues: GTPase Obg (333 aa).

Positions 1–159 constitute an Obg domain; it reads MKFIDEATIT…ATVRLELKLL (159 aa). The disordered stretch occupies residues 63–85; it reads KQFAAPNGAPGEGRQKTGKSGDD. Residues 75–84 show a composition bias toward basic and acidic residues; sequence GRQKTGKSGD. One can recognise an OBG-type G domain in the interval 160–329; the sequence is ADVGLIGLPN…LKKHLFELLC (170 aa). Residues 166–173, 191–195, 213–216, 283–286, and 310–312 contribute to the GTP site; these read GLPNAGKS, FTTLS, DIPG, NKMD, and SAA. Residues S173 and T193 each coordinate Mg(2+).

This sequence belongs to the TRAFAC class OBG-HflX-like GTPase superfamily. OBG GTPase family. As to quaternary structure, monomer. Mg(2+) is required as a cofactor.

Its subcellular location is the cytoplasm. Functionally, an essential GTPase which binds GTP, GDP and possibly (p)ppGpp with moderate affinity, with high nucleotide exchange rates and a fairly low GTP hydrolysis rate. Plays a role in control of the cell cycle, stress response, ribosome biogenesis and in those bacteria that undergo differentiation, in morphogenesis control. The polypeptide is GTPase Obg (Desulfosudis oleivorans (strain DSM 6200 / JCM 39069 / Hxd3) (Desulfococcus oleovorans)).